Here is a 199-residue protein sequence, read N- to C-terminus: TATA-box-binding protein (199 aa).

Repeat copies occupy residues 10–86 (IENI…VKLL) and 101–177 (IQNI…YNQL).

This sequence belongs to the TBP family.

Its function is as follows. General factor that plays a role in the activation of archaeal genes transcribed by RNA polymerase. Binds specifically to the TATA box promoter element which lies close to the position of transcription initiation. The polypeptide is TATA-box-binding protein (Pyrobaculum aerophilum (strain ATCC 51768 / DSM 7523 / JCM 9630 / CIP 104966 / NBRC 100827 / IM2)).